Reading from the N-terminus, the 149-residue chain is Large ribosomal subunit protein uL15 (149 aa).

A disordered region spans residues 1 to 64 (MVELHDLQPH…GQTPLYMRIP (64 aa)). Residues 31 to 40 (TAGRGHKGQK) show a composition bias toward basic residues.

Belongs to the universal ribosomal protein uL15 family. In terms of assembly, part of the 50S ribosomal subunit.

Its function is as follows. Binds to the 23S rRNA. This is Large ribosomal subunit protein uL15 from Aquifex aeolicus (strain VF5).